The following is a 165-amino-acid chain: Phosphopantetheine adenylyltransferase (165 aa).

Threonine 9 is a substrate binding site. Residues 9-10 (TF) and histidine 17 contribute to the ATP site. Residues lysine 41, leucine 78, and arginine 92 each contribute to the substrate site. ATP-binding positions include 93-95 (GLR), glutamate 103, and 128-134 (HQAIASK).

The protein belongs to the bacterial CoaD family. In terms of assembly, homohexamer. Requires Mg(2+) as cofactor.

It is found in the cytoplasm. It carries out the reaction (R)-4'-phosphopantetheine + ATP + H(+) = 3'-dephospho-CoA + diphosphate. It participates in cofactor biosynthesis; coenzyme A biosynthesis; CoA from (R)-pantothenate: step 4/5. Its function is as follows. Reversibly transfers an adenylyl group from ATP to 4'-phosphopantetheine, yielding dephospho-CoA (dPCoA) and pyrophosphate. In Ruegeria sp. (strain TM1040) (Silicibacter sp.), this protein is Phosphopantetheine adenylyltransferase.